Reading from the N-terminus, the 26-residue chain is Acetyl-CoA acetyltransferase (26 aa).

The Acyl-thioester intermediate role is filled by C21.

The protein belongs to the thiolase-like superfamily. Thiolase family. As to quaternary structure, homotetramer. Post-translationally, succinylation, adjacent to a coenzyme A binding site. Desuccinylated by SIRT5.

The protein resides in the mitochondrion. The enzyme catalyses 2 acetyl-CoA = acetoacetyl-CoA + CoA. This Sus scrofa (Pig) protein is Acetyl-CoA acetyltransferase.